We begin with the raw amino-acid sequence, 125 residues long: MDYEILFSDETMNYADAGTYCQSRGMALVSSAMRDSTMVKAILAFTEVKGHDYWVGADNLQDGAYNFLWNDGVSLPTDSDLWSPNEPSNPQSWQLCVQIWSKYNLLDDVGCGGARRVICEKELDD.

Residues 1-120 enclose the C-type lectin domain; that stretch reads MDYEILFSDE…CGGARRVICE (120 aa). Intrachain disulfides connect Cys21/Cys119 and Cys96/Cys111.

As to quaternary structure, homodimer.

Its function is as follows. Role in the defense system of the organism against microorganisms. This calcium-binding lectin binds galactose. The protein is Lectin of Polyandrocarpa misakiensis (Tunicate).